The sequence spans 164 residues: Putative anionic 4-hydroxy-benzoate permease (164 aa).

The tract at residues 1 to 30 (CGRRRGSLAWPDASSPSANPRPGAGAAESS) is disordered. Helical transmembrane passes span 62–82 (LWVA…LMFM), 97–117 (GMAQ…VGGL), and 126–146 (PALT…MLAG).

Belongs to the major facilitator superfamily. Cyanate porter (TC 2.A.1.17) family.

Its subcellular location is the cell membrane. In terms of biological role, may be involved in uptake of anionic 4-hydroxy-benzoate. In Thauera aromatica, this protein is Putative anionic 4-hydroxy-benzoate permease.